A 965-amino-acid polypeptide reads, in one-letter code: Serine/threonine-protein kinase tousled-like 1 (965 aa).

6 disordered regions span residues 1–22 (MSML…GGER), 35–72 (PQNK…ATGD), 95–120 (QNSS…TRSS), 172–292 (NHQQ…KQER), 320–402 (QNQG…QSGR), and 538–576 (RKPL…DDAI). Residues 10 to 21 (VAGGGSSSGGGE) show a composition bias toward gly residues. Positions 42–52 (TVQSSGSSSNH) are enriched in polar residues. The segment covering 172 to 231 (NHQQQMQQMHYHQQQQQYQQQQAQHHQMYAPQIQQQQQQPQQQSQQQSAQQPQQSSAALQ) has biased composition (low complexity). Polar residues-rich tracts occupy residues 233–244 (VNESSNLSSAGS) and 320–341 (QNQG…SYDS). Residues 342 to 355 (QQQQPQMNQHEMQN) show a composition bias toward low complexity. Over residues 365–381 (LGVNNRGTPTPTQQQHY) the composition is skewed to polar residues. Low complexity predominate over residues 382-401 (SSDSNSNSNQSPPGQGNQSG). Residues 552-572 (AVNSQNDSNGMQPSTSSNTNG) show a composition bias toward polar residues. Serine 634 carries the phosphoserine modification. The 278-residue stretch at 651–928 (YLMLNLLGKG…VFELAKHELF (278 aa)) folds into the Protein kinase domain. Residues 657 to 665 (LGKGGFSEV) and lysine 680 contribute to the ATP site. Aspartate 781 functions as the Proton acceptor in the catalytic mechanism.

Belongs to the protein kinase superfamily. Ser/Thr protein kinase family. Interacts with air-2. In terms of processing, autophosphorylates in vitro. Phosphorylation on Ser-634 by air-2 enhances catalytic activity.

The protein resides in the nucleus. The enzyme catalyses L-seryl-[protein] + ATP = O-phospho-L-seryl-[protein] + ADP + H(+). It carries out the reaction L-threonyl-[protein] + ATP = O-phospho-L-threonyl-[protein] + ADP + H(+). Its function is as follows. Essential for appropriate transcription during embryonic development. May act during transcription elongation to activate the RNA polymerase II large subunit (ama-1) by phosphorylating the Ser-2 residues of the C-terminal domain 7-residue repeats. Does not phosphorylate histone H3. This is Serine/threonine-protein kinase tousled-like 1 (tlk-1) from Caenorhabditis elegans.